The chain runs to 99 residues: uncharacterized protein (99 aa).

Residues Glu10–Gly29 form a helical membrane-spanning segment.

It is found in the membrane. This is an uncharacterized protein from Schizosaccharomyces pombe (strain 972 / ATCC 24843) (Fission yeast).